Consider the following 194-residue polypeptide: dITP/XTP pyrophosphatase (194 aa).

Thr8–Lys13 contacts substrate. Asp69 (proton acceptor) is an active-site residue. Asp69 is a binding site for Mg(2+). Substrate-binding positions include Thr70, Phe150 to Asp153, Lys173, and His178 to Arg179.

It belongs to the HAM1 NTPase family. Homodimer. It depends on Mg(2+) as a cofactor.

It carries out the reaction XTP + H2O = XMP + diphosphate + H(+). The catalysed reaction is dITP + H2O = dIMP + diphosphate + H(+). It catalyses the reaction ITP + H2O = IMP + diphosphate + H(+). Functionally, pyrophosphatase that catalyzes the hydrolysis of nucleoside triphosphates to their monophosphate derivatives, with a high preference for the non-canonical purine nucleotides XTP (xanthosine triphosphate), dITP (deoxyinosine triphosphate) and ITP. Seems to function as a house-cleaning enzyme that removes non-canonical purine nucleotides from the nucleotide pool, thus preventing their incorporation into DNA/RNA and avoiding chromosomal lesions. The sequence is that of dITP/XTP pyrophosphatase from Porphyromonas gingivalis (strain ATCC BAA-308 / W83).